We begin with the raw amino-acid sequence, 155 residues long: Large ribosomal subunit protein uL22c (155 aa).

The protein belongs to the universal ribosomal protein uL22 family. In terms of assembly, part of the 50S ribosomal subunit.

It is found in the plastid. Its subcellular location is the chloroplast. Functionally, this protein binds specifically to 23S rRNA. Its function is as follows. The globular domain of the protein is located near the polypeptide exit tunnel on the outside of the subunit, while an extended beta-hairpin is found that lines the wall of the exit tunnel in the center of the 70S ribosome. The polypeptide is Large ribosomal subunit protein uL22c (rpl22) (Solanum tuberosum (Potato)).